A 375-amino-acid chain; its full sequence is Chaperone protein DnaJ (375 aa).

One can recognise a J domain in the interval 5–70; that stretch reads DYYEVLGVAR…NKRRAYDAHG (66 aa). The CR-type zinc-finger motif lies at 131-208; it reads GIERRIEIPT…CHGAGRVEED (78 aa). 8 residues coordinate Zn(2+): C144, C147, C160, C163, C182, C185, C196, and C199. 4 CXXCXGXG motif repeats span residues 144–151, 160–167, 182–189, and 196–203; these read CAPCHGSG, CGTCHGRG, CPHCDGRG, and CKTCHGAG.

It belongs to the DnaJ family. As to quaternary structure, homodimer. Zn(2+) serves as cofactor.

It localises to the cytoplasm. Its function is as follows. Participates actively in the response to hyperosmotic and heat shock by preventing the aggregation of stress-denatured proteins and by disaggregating proteins, also in an autonomous, DnaK-independent fashion. Unfolded proteins bind initially to DnaJ; upon interaction with the DnaJ-bound protein, DnaK hydrolyzes its bound ATP, resulting in the formation of a stable complex. GrpE releases ADP from DnaK; ATP binding to DnaK triggers the release of the substrate protein, thus completing the reaction cycle. Several rounds of ATP-dependent interactions between DnaJ, DnaK and GrpE are required for fully efficient folding. Also involved, together with DnaK and GrpE, in the DNA replication of plasmids through activation of initiation proteins. This chain is Chaperone protein DnaJ, found in Xanthomonas axonopodis pv. citri (strain 306).